The primary structure comprises 156 residues: ATP synthase subunit b (156 aa).

Residues 7–27 (LFVQAIVFLILVLFTMKFVWP) form a helical membrane-spanning segment.

This sequence belongs to the ATPase B chain family. In terms of assembly, F-type ATPases have 2 components, F(1) - the catalytic core - and F(0) - the membrane proton channel. F(1) has five subunits: alpha(3), beta(3), gamma(1), delta(1), epsilon(1). F(0) has three main subunits: a(1), b(2) and c(10-14). The alpha and beta chains form an alternating ring which encloses part of the gamma chain. F(1) is attached to F(0) by a central stalk formed by the gamma and epsilon chains, while a peripheral stalk is formed by the delta and b chains.

The protein resides in the cell inner membrane. Its function is as follows. F(1)F(0) ATP synthase produces ATP from ADP in the presence of a proton or sodium gradient. F-type ATPases consist of two structural domains, F(1) containing the extramembraneous catalytic core and F(0) containing the membrane proton channel, linked together by a central stalk and a peripheral stalk. During catalysis, ATP synthesis in the catalytic domain of F(1) is coupled via a rotary mechanism of the central stalk subunits to proton translocation. In terms of biological role, component of the F(0) channel, it forms part of the peripheral stalk, linking F(1) to F(0). The protein is ATP synthase subunit b of Paracidovorax citrulli (strain AAC00-1) (Acidovorax citrulli).